The sequence spans 95 residues: Large ribosomal subunit protein bL25 (95 aa).

This sequence belongs to the bacterial ribosomal protein bL25 family. As to quaternary structure, part of the 50S ribosomal subunit; part of the 5S rRNA/L5/L18/L25 subcomplex. Contacts the 5S rRNA. Binds to the 5S rRNA independently of L5 and L18.

This is one of the proteins that binds to the 5S RNA in the ribosome where it forms part of the central protuberance. The protein is Large ribosomal subunit protein bL25 of Actinobacillus succinogenes (strain ATCC 55618 / DSM 22257 / CCUG 43843 / 130Z).